The primary structure comprises 573 residues: 2-succinyl-5-enolpyruvyl-6-hydroxy-3-cyclohexene-1-carboxylate synthase (573 aa).

Belongs to the TPP enzyme family. MenD subfamily. Homodimer. The cofactor is Mg(2+). Requires Mn(2+) as cofactor. Thiamine diphosphate is required as a cofactor.

It carries out the reaction isochorismate + 2-oxoglutarate + H(+) = 5-enolpyruvoyl-6-hydroxy-2-succinyl-cyclohex-3-ene-1-carboxylate + CO2. Its pathway is quinol/quinone metabolism; 1,4-dihydroxy-2-naphthoate biosynthesis; 1,4-dihydroxy-2-naphthoate from chorismate: step 2/7. The protein operates within quinol/quinone metabolism; menaquinone biosynthesis. In terms of biological role, catalyzes the thiamine diphosphate-dependent decarboxylation of 2-oxoglutarate and the subsequent addition of the resulting succinic semialdehyde-thiamine pyrophosphate anion to isochorismate to yield 2-succinyl-5-enolpyruvyl-6-hydroxy-3-cyclohexene-1-carboxylate (SEPHCHC). In Shewanella baltica (strain OS155 / ATCC BAA-1091), this protein is 2-succinyl-5-enolpyruvyl-6-hydroxy-3-cyclohexene-1-carboxylate synthase.